A 220-amino-acid chain; its full sequence is Thiopurine S-methyltransferase (220 aa).

Residues Trp10, Leu45, Glu66, and Arg123 each contribute to the S-adenosyl-L-methionine site.

It belongs to the class I-like SAM-binding methyltransferase superfamily. TPMT family.

Its subcellular location is the cytoplasm. It catalyses the reaction S-adenosyl-L-methionine + a thiopurine = S-adenosyl-L-homocysteine + a thiopurine S-methylether.. In Pseudomonas syringae pv. tomato (strain ATCC BAA-871 / DC3000), this protein is Thiopurine S-methyltransferase.